The chain runs to 859 residues: Leucine--tRNA ligase (859 aa).

Positions 42-52 (PYPSGRLHMGH) match the 'HIGH' region motif. The 'KMSKS' region signature appears at 618–622 (KMSKS). Position 621 (Lys621) interacts with ATP.

It belongs to the class-I aminoacyl-tRNA synthetase family.

The protein resides in the cytoplasm. It catalyses the reaction tRNA(Leu) + L-leucine + ATP = L-leucyl-tRNA(Leu) + AMP + diphosphate. This chain is Leucine--tRNA ligase, found in Shewanella sp. (strain MR-7).